Reading from the N-terminus, the 100-residue chain is Small ribosomal subunit protein uS14c (100 aa).

The protein belongs to the universal ribosomal protein uS14 family. Part of the 30S ribosomal subunit.

It localises to the plastid. The protein resides in the cyanelle. Its function is as follows. Binds 16S rRNA, required for the assembly of 30S particles. This is Small ribosomal subunit protein uS14c from Cyanophora paradoxa.